The following is a 115-amino-acid chain: Large ribosomal subunit protein bL19 (115 aa).

It belongs to the bacterial ribosomal protein bL19 family.

This protein is located at the 30S-50S ribosomal subunit interface and may play a role in the structure and function of the aminoacyl-tRNA binding site. In Francisella tularensis subsp. tularensis (strain WY96-3418), this protein is Large ribosomal subunit protein bL19.